Here is a 682-residue protein sequence, read N- to C-terminus: Potassium-transporting ATPase ATP-binding subunit (682 aa).

4 helical membrane passes run 34-54 (PVMFIVWIGSLLTTFISIAMA), 62-82 (ALFSAAISAWLWVTVLFANFA), 219-239 (IALTILLIALTIVFLLATATL), and 254-274 (VLVALLVCLIPTTIGGLLSAI). The active-site 4-aspartylphosphate intermediate is D307. Residues D344, E348, 377-384 (FTAQSRMS), and K395 contribute to the ATP site. 2 residues coordinate Mg(2+): D518 and D522. 3 helical membrane passes run 588–608 (FAIIPAAFAATYPQLNALNIM), 616–636 (AILSAVIFNALIIVFLIPLAL), and 656–676 (IYGLGGLLVPFIGIKVIDLLL).

Belongs to the cation transport ATPase (P-type) (TC 3.A.3) family. Type IA subfamily. As to quaternary structure, the system is composed of three essential subunits: KdpA, KdpB and KdpC.

The protein localises to the cell inner membrane. It carries out the reaction K(+)(out) + ATP + H2O = K(+)(in) + ADP + phosphate + H(+). Part of the high-affinity ATP-driven potassium transport (or Kdp) system, which catalyzes the hydrolysis of ATP coupled with the electrogenic transport of potassium into the cytoplasm. This subunit is responsible for energy coupling to the transport system and for the release of the potassium ions to the cytoplasm. The sequence is that of Potassium-transporting ATPase ATP-binding subunit from Escherichia coli (strain SMS-3-5 / SECEC).